Reading from the N-terminus, the 829-residue chain is Leucine--tRNA ligase (829 aa).

Positions 40-50 (PYPSGNIHMGH) match the 'HIGH' region motif. The short motif at 581 to 585 (KMSKS) is the 'KMSKS' region element. Lys-584 provides a ligand contact to ATP.

Belongs to the class-I aminoacyl-tRNA synthetase family.

The protein localises to the cytoplasm. It catalyses the reaction tRNA(Leu) + L-leucine + ATP = L-leucyl-tRNA(Leu) + AMP + diphosphate. The polypeptide is Leucine--tRNA ligase (Nitratidesulfovibrio vulgaris (strain DP4) (Desulfovibrio vulgaris)).